A 92-amino-acid polypeptide reads, in one-letter code: Small ribosomal subunit protein uS19 (92 aa).

It belongs to the universal ribosomal protein uS19 family.

Its function is as follows. Protein S19 forms a complex with S13 that binds strongly to the 16S ribosomal RNA. In Sulfurovum sp. (strain NBC37-1), this protein is Small ribosomal subunit protein uS19.